A 506-amino-acid chain; its full sequence is UDP-N-acetylglucosamine--peptide N-acetylglucosaminyltransferase GtfA subunit (506 aa).

16–19 (GVEY) serves as a coordination point for UDP. Histidine 241 is an N-acetyl-D-glucosamine binding site. Position 384 to 385 (384 to 385 (HK)) interacts with UDP. Residue 404 to 407 (EGFG) participates in N-acetyl-D-glucosamine binding.

This sequence belongs to the glycosyltransferase group 1 family. Glycosyltransferase 4 subfamily. In terms of assembly, interacts with stabilizing protein GtfB (Gtf2), probably as a heterotetramer with 2 subunits each of GtfA and GtfB, part of the accessory SecA2/SecY2 protein translocation apparatus.

The protein resides in the cytoplasm. Its subcellular location is the cell membrane. The enzyme catalyses L-seryl-[protein] + UDP-N-acetyl-alpha-D-glucosamine = 3-O-[N-acetyl-alpha-D-glucosaminyl]-L-seryl-[protein] + UDP + H(+). It participates in protein modification; protein glycosylation. Required for polymorphic O-glycosylation of the serine-rich repeat protein Srr2. Catalyzes the first step in glycosylation by transferring N-acetylglucosamine from UDP-GlcNAc to serine residues of Srr2. Part of the accessory SecA2/SecY2 system specifically required to export serine-rich repeat proteins, probably Srr2 in this organism. The GtfA-GtfB (Gtf1-Gtf2 in this bacteria) complex adds GlcNAc from UDP-GlcNAc to Srr2 substrate. This subunit has low glycosyltransferase activity; GtfB enhances glycosyltransferase activity in vitro. Upon expression in S.parasanguis GtfA/GtfB restores expression of serine-rich repeat protein Fap1 and complements a biofilm formation defect. The protein is UDP-N-acetylglucosamine--peptide N-acetylglucosaminyltransferase GtfA subunit of Streptococcus agalactiae.